The primary structure comprises 343 residues: S-adenosylmethionine:tRNA ribosyltransferase-isomerase (343 aa).

It belongs to the QueA family. In terms of assembly, monomer.

Its subcellular location is the cytoplasm. The enzyme catalyses 7-aminomethyl-7-carbaguanosine(34) in tRNA + S-adenosyl-L-methionine = epoxyqueuosine(34) in tRNA + adenine + L-methionine + 2 H(+). Its pathway is tRNA modification; tRNA-queuosine biosynthesis. Its function is as follows. Transfers and isomerizes the ribose moiety from AdoMet to the 7-aminomethyl group of 7-deazaguanine (preQ1-tRNA) to give epoxyqueuosine (oQ-tRNA). The protein is S-adenosylmethionine:tRNA ribosyltransferase-isomerase of Hydrogenobaculum sp. (strain Y04AAS1).